Consider the following 429-residue polypeptide: Phosphoribosylamine--glycine ligase (429 aa).

Residues 108–315 (KDFLARHRIP…LVLLVEAALA (208 aa)) form the ATP-grasp domain. 134–195 (LHEQGAPIVI…EEFLDGEEAS (62 aa)) contacts ATP. Glutamate 285 and asparagine 287 together coordinate Mg(2+).

It belongs to the GARS family. Mg(2+) is required as a cofactor. Requires Mn(2+) as cofactor.

The catalysed reaction is 5-phospho-beta-D-ribosylamine + glycine + ATP = N(1)-(5-phospho-beta-D-ribosyl)glycinamide + ADP + phosphate + H(+). The protein operates within purine metabolism; IMP biosynthesis via de novo pathway; N(1)-(5-phospho-D-ribosyl)glycinamide from 5-phospho-alpha-D-ribose 1-diphosphate: step 2/2. The chain is Phosphoribosylamine--glycine ligase from Pseudomonas aeruginosa (strain ATCC 15692 / DSM 22644 / CIP 104116 / JCM 14847 / LMG 12228 / 1C / PRS 101 / PAO1).